Reading from the N-terminus, the 107-residue chain is ATP-dependent Clp protease adapter protein ClpS (107 aa).

Belongs to the ClpS family. In terms of assembly, binds to the N-terminal domain of the chaperone ClpA.

In terms of biological role, involved in the modulation of the specificity of the ClpAP-mediated ATP-dependent protein degradation. The polypeptide is ATP-dependent Clp protease adapter protein ClpS (Acinetobacter baylyi (strain ATCC 33305 / BD413 / ADP1)).